A 229-amino-acid polypeptide reads, in one-letter code: Ribosome maturation factor RimM (229 aa).

The disordered stretch occupies residues 1–21 (MAGHDSGNAKRGRSPSFGVFV). Positions 148 to 229 (ADEFYWVDLI…RVVVDWEADY (82 aa)) constitute a PRC barrel domain.

It belongs to the RimM family. As to quaternary structure, binds ribosomal protein uS19.

The protein resides in the cytoplasm. In terms of biological role, an accessory protein needed during the final step in the assembly of 30S ribosomal subunit, possibly for assembly of the head region. Essential for efficient processing of 16S rRNA. May be needed both before and after RbfA during the maturation of 16S rRNA. It has affinity for free ribosomal 30S subunits but not for 70S ribosomes. In Burkholderia pseudomallei (strain 1106a), this protein is Ribosome maturation factor RimM.